Reading from the N-terminus, the 184-residue chain is Non-specific lipid transfer protein GPI-anchored 6 (184 aa).

An N-terminal signal peptide occupies residues Met1–Ser24. Intrachain disulfides connect Cys33-Cys74, Cys43-Cys58, Cys59-Cys101, and Cys72-Cys111. Residues Asn138–Val158 form a disordered region. Ser160 is lipidated: GPI-anchor amidated serine. The propeptide at Asn161–Phe184 is removed in mature form.

Belongs to the plant LTP family. As to expression, preferentially expressed in the shoot apical meristem and the root meristem. Also present in the ovules and developing embryos. Observed in cotyledons, hypocotyls, flowers, leaves and siliques. Up-regulated in the epidermis of stems.

Its subcellular location is the cell membrane. Functionally, lipid transfer protein involved in seed and ovule maturation and development, probably by regulating the fatty acids homeostasis during suberin and sporopollenin biosynthesis or deposition. Contributes to pre-invasive defense against some non-host powdery mildew pathogens by preventing the penetration of the epidermal cell wall by the fungal agents (e.g. Blumeria graminis f. sp. hordei (Bgh)). The polypeptide is Non-specific lipid transfer protein GPI-anchored 6 (Arabidopsis thaliana (Mouse-ear cress)).